The following is a 975-amino-acid chain: Translation initiation factor IF-2 (975 aa).

The segment covering 48–63 (DHLRKSHGATDGDKRK) has biased composition (basic and acidic residues). Disordered regions lie at residues 48 to 84 (DHLR…GKAR) and 96 to 388 (FVKR…QAPT). Low complexity predominate over residues 104 to 115 (ETGADQAQAQTD). Residues 120–177 (AELKRREEEARREAELLEKQAQELRERQERLEREEAERRAREEAAEAERRRAEEEAAA) are compositionally biased toward basic and acidic residues. Over residues 178–211 (KRAAAAQAEAAQQAAAAREQAQRAQSEPAEQSAQ) the composition is skewed to low complexity. Residues 212-263 (DEARAAAERAAQREAAKKAEDAAREAADKARAEQEEIRKRREAAEAEARAIR) show a composition bias toward basic and acidic residues. The span at 302-330 (KPAGEAAAARPAAKKPASGAPAPAAAPAG) shows a compositional bias: low complexity. Over residues 359–372 (SSGGVDRGWRGGPK) the composition is skewed to gly residues. The tr-type G domain maps to 475–644 (PRPPVVTVMG…LLQAEVLELK (170 aa)). Positions 484–491 (GHVDHGKT) are G1. A GTP-binding site is contributed by 484–491 (GHVDHGKT). The interval 509–513 (GITQH) is G2. The G3 stretch occupies residues 530–533 (DTPG). Residues 530 to 534 (DTPGH) and 584 to 587 (NKID) each bind GTP. The tract at residues 584 to 587 (NKID) is G4. The interval 620–622 (SAK) is G5.

Belongs to the TRAFAC class translation factor GTPase superfamily. Classic translation factor GTPase family. IF-2 subfamily.

It localises to the cytoplasm. Functionally, one of the essential components for the initiation of protein synthesis. Protects formylmethionyl-tRNA from spontaneous hydrolysis and promotes its binding to the 30S ribosomal subunits. Also involved in the hydrolysis of GTP during the formation of the 70S ribosomal complex. This Burkholderia pseudomallei (strain 1710b) protein is Translation initiation factor IF-2.